A 207-amino-acid polypeptide reads, in one-letter code: Ribosomal RNA large subunit methyltransferase E (207 aa).

5 residues coordinate S-adenosyl-L-methionine: glycine 60, tryptophan 62, aspartate 80, aspartate 96, and aspartate 121. The active-site Proton acceptor is lysine 161.

It belongs to the class I-like SAM-binding methyltransferase superfamily. RNA methyltransferase RlmE family.

The protein resides in the cytoplasm. It carries out the reaction uridine(2552) in 23S rRNA + S-adenosyl-L-methionine = 2'-O-methyluridine(2552) in 23S rRNA + S-adenosyl-L-homocysteine + H(+). In terms of biological role, specifically methylates the uridine in position 2552 of 23S rRNA at the 2'-O position of the ribose in the fully assembled 50S ribosomal subunit. This chain is Ribosomal RNA large subunit methyltransferase E, found in Thioalkalivibrio sulfidiphilus (strain HL-EbGR7).